Consider the following 257-residue polypeptide: UPF0246 protein YaaA (257 aa).

The protein belongs to the UPF0246 family.

The polypeptide is UPF0246 protein YaaA (Salmonella choleraesuis (strain SC-B67)).